We begin with the raw amino-acid sequence, 285 residues long: Glutamate racemase (285 aa).

Residues 28–29 and 60–61 contribute to the substrate site; these read DS and YG. The active-site Proton donor/acceptor is Cys-92. 93–94 contributes to the substrate binding site; that stretch reads NT. The active-site Proton donor/acceptor is Cys-204. 205 to 206 contacts substrate; sequence TH.

The protein belongs to the aspartate/glutamate racemases family.

The enzyme catalyses L-glutamate = D-glutamate. It participates in cell wall biogenesis; peptidoglycan biosynthesis. Its function is as follows. Provides the (R)-glutamate required for cell wall biosynthesis. In Escherichia coli O7:K1 (strain IAI39 / ExPEC), this protein is Glutamate racemase.